The chain runs to 372 residues: Cyclin-dependent kinase 9 (372 aa).

Positions 19-315 (YEKLAKIGQG…SDDALNHDFF (297 aa)) constitute a Protein kinase domain. 25–33 (IGQGTFGEV) contacts ATP. Position 35 is a phosphoserine (K35). The residue at position 44 (K44) is an N6-acetyllysine; by EP300/CBP, PCAF/KAT2B and GCN5/KAT2A. Residue K48 coordinates ATP. Residue K48 is modified to N6-acetyllysine; by PCAF/KAT2B and GCN5/KAT2A. N54 is subject to Phosphothreonine. 104 to 106 (DFC) contributes to the ATP binding site. Residue D149 is the Proton acceptor of the active site. Residues 166-191 (ADFGLARAFSLAKNSQPNRYTNRVVT) form a T-loop region. D167 is an ATP binding site. A Phosphoserine modification is found at S175. A Phosphothreonine; by CaMK1D modification is found at T186. The segment at 343–372 (RRKGSQITQQSTNQSRNPATTNQTEFERVF) is disordered. S347 carries the post-translational modification Phosphoserine; by CDK9 and PKA. Over residues 347 to 366 (SQITQQSTNQSRNPATTNQT) the composition is skewed to polar residues. Position 350 is a phosphothreonine; by CDK9 (T350). S353 is modified (phosphoserine; by CDK9). Residue T354 is modified to Phosphothreonine; by CDK9. S357 bears the Phosphoserine; by CDK9 mark. 2 positions are modified to phosphothreonine; by CDK9: T362 and T363.

It belongs to the protein kinase superfamily. CMGC Ser/Thr protein kinase family. CDC2/CDKX subfamily. Component of the super elongation complex (SEC), at least composed of EAF1, EAF2, CDK9, MLLT3/AF9, AFF (AFF1 or AFF4), the P-TEFb complex and ELL (ELL, ELL2 or ELL3). Associates with CCNT1/cyclin-T1, CCNT2/cyclin-T2 (isoform A and isoform B) or CCNK/cyclin-K to form active P-TEFb. P-TEFb forms a complex with AFF4/AF5Q31 and is part of the super elongation complex (SEC). Component of a complex which is composed of at least 5 members: HTATSF1/Tat-SF1, P-TEFb complex, RNA pol II, SUPT5H and NCL/nucleolin. Associates with UBR5 and forms a transcription regulatory complex composed of CDK9, RNAP II, UBR5 and TFIIS/TCEA1 that can stimulate target gene transcription (e.g. gamma fibrinogen/FGG) by recruiting their promoters. Component of the 7SK snRNP inactive complex which is composed of at least 8 members: P-TEFb (composed of CDK9 and CCNT1/cyclin-T1), HEXIM1, HEXIM2, LARP7, BCDIN3, SART3 proteins and 7SK and U6 snRNAs. This inactive 7SK snRNP complex can also interact with NCOR1 and HDAC3, probably to regulate CDK9 acetylation. Release of P-TEFb from P-TEFb/7SK snRNP complex requires both PP2B to transduce calcium Ca(2+) signaling in response to stimuli (e.g. UV or hexamethylene bisacetamide (HMBA)) and PPP1CA to dephosphorylate Thr-186. This released P-TEFb remains inactive in the pre-initiation complex with BRD4 until new Thr-186 phosphorylation occurs after the synthesis of a short RNA. Interacts with BRD4; to target chromatin binding. Interacts with JMJD6. Interacts with activated nuclear STAT3 and RELA/p65. Binds to AR and MYOD1. Forms a complex composed of CDK9, CCNT1/cyclin-T1, EP300 and GATA4 that stimulates hypertrophy in cardiomyocytes. The large PER complex involved in the repression of transcriptional termination is composed of at least PER2, CDK9, DDX5, DHX9, NCBP1 and POLR2A. Interacts with HSF1. Interacts with TBX21. Isoform 3: binds to KU70/XRCC6. Interacts with WDR43. Interacts with ZMYND8; the association appears to occur between homodimeric ZMYND8 and the activated form of the P-TEFb complex. In terms of assembly, (Microbial infection) Interacts with the acidic/proline-rich region of HIV-1 and HIV-2 Tat via T-loop region and is thus required for HIV to hijack host transcription machinery during its replication through cooperative binding to viral TAR RNA. As to quaternary structure, (Microbial infection) Interacts with human herpes virus 1 (HHV-1) protein ICP22; this interaction blocks the recruitment of positive transcription elongation factor b (P-TEFb) to the viral promoter. In terms of processing, autophosphorylation at Thr-186, Ser-347, Thr-350, Ser-353, Thr-354 and Ser-357 triggers kinase activity by promoting cyclin and substrate binding (e.g. HIV TAT) upon conformational changes. Thr-186 phosphorylation requires the calcium Ca(2+) signaling pathway, including CaMK1D and calmodulin. This inhibition is relieved by Thr-29 dephosphorylation. However, phosphorylation at Thr-29 is inhibitory within the HIV transcription initiation complex. Phosphorylation at Ser-175 inhibits kinase activity. Can be phosphorylated on either Thr-362 or Thr-363 but not on both simultaneously. Dephosphorylation of Thr-186 by PPM1A and PPM1B blocks CDK9 activity and may lead to CDK9 proteasomal degradation. However, PPP1CA-mediated Thr-186 dephosphorylation is required to release P-TEFb from its inactive P-TEFb/7SK snRNP complex. Dephosphorylated at Ser-347 by the PNUTS-PP1 complex during RNA polymerase II transcription pause-release. Dephosphorylation of C-terminus Thr and Ser residues by protein phosphatase-1 (PP1) triggers CDK9 activity, contributing to the activation of HIV-1 transcription. Post-translationally, N6-acetylation of Lys-44 promotes kinase activity, whereas acetylation of both Lys-44 and Lys-48 mediated by PCAF/KAT2B and GCN5/KAT2A reduces kinase activity. The acetylated form associates with PML bodies in the nuclear matrix and with the transcriptionally silent HIV-1 genome; deacetylated upon transcription stimulation. Deacetylated by SIRT7, promoting the kinase activity and subsequent 'Ser-2' phosphorylation of the C-terminal domain (CTD) of RNA polymerase II. In terms of processing, polyubiquitinated and thus activated by UBR5. This ubiquitination is promoted by TFIIS/TCEA1 and favors 'Ser-2' phosphorylation of RPB1/POLR2A CTD. As to expression, ubiquitous.

Its subcellular location is the nucleus. It localises to the cytoplasm. The protein resides in the PML body. The enzyme catalyses L-seryl-[protein] + ATP = O-phospho-L-seryl-[protein] + ADP + H(+). The catalysed reaction is L-threonyl-[protein] + ATP = O-phospho-L-threonyl-[protein] + ADP + H(+). It catalyses the reaction [DNA-directed RNA polymerase] + ATP = phospho-[DNA-directed RNA polymerase] + ADP + H(+). Its activity is regulated as follows. Inhibited by CDKI-71, CR8, GPC-286199, AG-024322, flavopiridol (alvocidib), RBG-286147, anilinopyrimidine 32, arylazopyrazole 31b, indirubin 3'-monoxime, meriolin 3,P276-00, olomoucine II, pyrazolotriazine, meriolin, variolin, thiazolyl-pyrimidine, thiazolyl-pyrimidine, indirubin-30-monoxime, ZK 304709, AG-012986, AT7519, R547, RGB-286638, imidazole pyrimidine, EXEL-3700, EXEL-8647, 5,6-dichloro-1-b-ribofur-anosyl-benzimidazole (DRB), P276-00, roscovitine (seliciclib, CYC202) and SNS-032 (BMS-387032). Activation by Thr-186 phosphorylation is calcium Ca(2+) signaling pathway-dependent; actively inactivated by dephosphorylation mediated by PPP1CA, PPM1A and PPM1B. Reversibly repressed by acetylation at Lys-44 and Lys-48. Protein kinase involved in the regulation of transcription. Member of the cyclin-dependent kinase pair (CDK9/cyclin-T) complex, also called positive transcription elongation factor b (P-TEFb), which facilitates the transition from abortive to productive elongation by phosphorylating the CTD (C-terminal domain) of the large subunit of RNA polymerase II (RNAP II) POLR2A, SUPT5H and RDBP. This complex is inactive when in the 7SK snRNP complex form. Phosphorylates EP300, MYOD1, RPB1/POLR2A and AR and the negative elongation factors DSIF and NELFE. Regulates cytokine inducible transcription networks by facilitating promoter recognition of target transcription factors (e.g. TNF-inducible RELA/p65 activation and IL-6-inducible STAT3 signaling). Promotes RNA synthesis in genetic programs for cell growth, differentiation and viral pathogenesis. P-TEFb is also involved in cotranscriptional histone modification, mRNA processing and mRNA export. Modulates a complex network of chromatin modifications including histone H2B monoubiquitination (H2Bub1), H3 lysine 4 trimethylation (H3K4me3) and H3K36me3; integrates phosphorylation during transcription with chromatin modifications to control co-transcriptional histone mRNA processing. The CDK9/cyclin-K complex has also a kinase activity towards CTD of RNAP II and can substitute for CDK9/cyclin-T P-TEFb in vitro. Replication stress response protein; the CDK9/cyclin-K complex is required for genome integrity maintenance, by promoting cell cycle recovery from replication arrest and limiting single-stranded DNA amount in response to replication stress, thus reducing the breakdown of stalled replication forks and avoiding DNA damage. In addition, probable function in DNA repair of isoform 2 via interaction with KU70/XRCC6. Promotes cardiac myocyte enlargement. RPB1/POLR2A phosphorylation on 'Ser-2' in CTD activates transcription. AR phosphorylation modulates AR transcription factor promoter selectivity and cell growth. DSIF and NELF phosphorylation promotes transcription by inhibiting their negative effect. The phosphorylation of MYOD1 enhances its transcriptional activity and thus promotes muscle differentiation. Catalyzes phosphorylation of KAT5, promoting KAT5 recruitment to chromatin and histone acetyltransferase activity. This chain is Cyclin-dependent kinase 9, found in Homo sapiens (Human).